We begin with the raw amino-acid sequence, 1115 residues long: Scavenger receptor cysteine-rich type 1 protein M130 (1115 aa).

Positions 1–46 (MDKLRMVLHENSGSADFRRCSAHLSSFTFAVVAVLSACLVTSSLGG) are cleaved as a signal peptide. Over 47-1044 (KDKELRLTGG…ESLHATGRSS (998 aa)) the chain is Extracellular. 9 consecutive SRCR domains span residues 51-151 (LRLT…VTCS), 158-258 (MGLV…VICL), 265-365 (LRVV…VTCS), 372-472 (LRLK…ITCS), 477-577 (PRLV…VVCS), 582-682 (IRLV…VICS), 718-818 (LRLV…VICS), 823-925 (LRLI…ITCA), and 928-1028 (IRLQ…VTCS). Intrachain disulfides connect cysteine 76/cysteine 140, cysteine 89/cysteine 150, cysteine 120/cysteine 130, cysteine 183/cysteine 247, cysteine 196/cysteine 257, cysteine 227/cysteine 237, cysteine 290/cysteine 354, cysteine 303/cysteine 364, cysteine 334/cysteine 344, cysteine 397/cysteine 461, cysteine 410/cysteine 471, cysteine 441/cysteine 451, cysteine 502/cysteine 566, cysteine 515/cysteine 576, cysteine 546/cysteine 556, cysteine 607/cysteine 671, cysteine 620/cysteine 681, cysteine 651/cysteine 661, cysteine 743/cysteine 807, cysteine 756/cysteine 817, cysteine 787/cysteine 797, cysteine 863/cysteine 924, and cysteine 894/cysteine 904. N-linked (GlcNAc...) asparagine glycosylation occurs at asparagine 105. Asparagine 139 is a glycosylation site (N-linked (GlcNAc...) asparagine). Asparagine 936 carries an N-linked (GlcNAc...) asparagine glycan. Intrachain disulfides connect cysteine 953/cysteine 1017, cysteine 966/cysteine 1027, and cysteine 997/cysteine 1007. A helical transmembrane segment spans residues 1045-1065 (FVALAIFGVILLACLIAFLIW). The Cytoplasmic segment spans residues 1066-1115 (TQKRRQRQRLSVFSGGENSVHQIQYREMNSCLKADETDMLNPSGDHSEVQ). Positions 1090–1093 (YREM) match the Internalization signal motif.

In terms of assembly, interacts with CSNK2B. In terms of processing, a soluble form (sCD163) is produced by proteolytic shedding which can be induced by lipopolysaccharide, phorbol ester and Fc region of immunoglobulin gamma. This cleavage is dependent on protein kinase C and tyrosine kinases and can be blocked by protease inhibitors. The shedding is inhibited by the tissue inhibitor of metalloproteinase TIMP3, and thus probably induced by membrane-bound metalloproteinases ADAMs. Post-translationally, phosphorylated. Expressed in monocytes and macrophages. Detected only in one population of monocytes (CD163+) which is in advanced maturation stage.

It is found in the secreted. The protein resides in the cell membrane. Involved in clearance and endocytosis of hemoglobin/haptoglobin complexes by macrophages and may thereby protect tissues from free hemoglobin-mediated oxidative damage. May play a role in the uptake and recycling of iron, via endocytosis of hemoglobin/haptoglobin and subsequent breakdown of heme. Binds hemoglobin/haptoglobin complexes in a calcium-dependent and pH-dependent manner. Induces a cascade of intracellular signals that involves tyrosine kinase-dependent calcium mobilization, inositol triphosphate production and secretion of IL6 and CSF1. May play a role in the process of infection of porcine monocytes/macrophages by African swine fever virus (ASFV). In case of porcine reproductive and respiratory syndrome virus (PRRSV), serves mediates virion attachment and plays a role in viral entry. Its function is as follows. After shedding, the soluble form (sCD163) may play an anti-inflammatory role. In Sus scrofa (Pig), this protein is Scavenger receptor cysteine-rich type 1 protein M130 (CD163).